Reading from the N-terminus, the 135-residue chain is UPF0299 membrane protein YPK_2559 (135 aa).

Transmembrane regions (helical) follow at residues 30-50 (LLLP…FVLL), 66-86 (LLIR…MQYY), and 93-113 (FGPI…VVAY).

This sequence belongs to the UPF0299 family.

The protein localises to the cell inner membrane. This chain is UPF0299 membrane protein YPK_2559, found in Yersinia pseudotuberculosis serotype O:3 (strain YPIII).